Reading from the N-terminus, the 1940-residue chain is MSSDAEMAIFGEAAPYLRKPEKERIEAQNRPFDSKKACFAMDDKEMYVKGMIQSRENDKVTVKTLDDRTLTLNSDQVFPMNPPKFDKIEDMAMMTHLHEPAVLYNLKERYAAWMIYTYSGLFCVTVNPYKWLPVYNPEVVTAYRGKKRQEAPPHIFSISDNAYQFMLTDRDNQSILITGESGAGKTVNTKRVIQYFATIAVTGEKKKEQQPGKMQGTLEDQIIQANPLLEAFGNAKTVRNDNSSRFGKFIRIHFGATGKLASADIETYLLEKSRVTFQLSSERSYHIFYQILSNKKPELIDLLLISTNPFDFPFVSQGEVTVASINDSEELLATDNAIDILGFSSEEKVGIYKLTGAVMHYGNMKFKQKQREEQAEPDGTEVADKAGYLMGLNSAEMLKGLCCPRVKVGNEYVTKGQNVQQVTNSVGALAKAVYEKMFLWMVTRINQQLDTKQPRQYFIGVLDIAGFEIFDFNSLEQLCINFTNEKLQQFFNHHMFVLEQEEYKKEGIEWEFIDFGMDLAACIELIEKPMGIFSILEEECMFPKATDTSFKNKLYDQHLGKSNNFQKPKPAKGKAEAHFSLVHYAGTVDYNIAGWLDKNKDPLNETVVGLYQKSSLKLLSFLFSNYAGAEAGDSGGSKKGGKKKGSSFQTVSAVFRENLNKLMTNLRSTHPHFVRCLIPNETKTPGVMDHYLVMHQLRCNGVLEGIRICRKGFPSRILYADFKQRYRILNASAIPEGQFIDSKNASEKLLSSIDVDREQYRFGHTKVFFKAGLLGLLEEMRDEKLVTLMTRTQAICRGYLMRVEFKKMMERRESIFCIQYNIRSFMNVKHWPWMNLFFKIKPLLKSAEAEREMATMKEDFERAKEELARSEARRKELEEKMVSLLQEKNDLQLQVQSETENLIDAEERCEGLIKSKIQLEAKVKELNERLEEEEEVNSDLVAKKRSLEDKCSSLKRDIDDLELTLTKVEKEKHATENKVKNLSEEMTALEENISKLTKEKKSLQEAHQQALDDLQVEEDKVNGLIKINVKLEQQTDDLEGSLEQEKKLRADLERIKKKLEGDLKLSQESIMDLENDKQQVEEKLKKKEFEISQLQTKIDDEQVHSLQLQKKIKELQARIEELEEEIEAERASRAKAEKQRSDLSRELEEISERLEEASGVTSAQVEMNKKREAEFQKLRRDLEEATLQHEATTAALRKKHADSVAELGEQIDNLQRVKQKLEKEKSELKMEIDDLASNIETVSKSKSNVERMCRTVEDQFNEIKAKDDQQTQLIHDLNMQKARLQTQNGELSHQLEEKESLISQLTKGKQALTQQLEELKRQLEEETKAKNALAHALQSSRHDCDLLREQYEEEQEGKAELQRALSKANSEVAQWRTKYETDAIQRTEELEEAKKKLAQRLQEAEENTEAVSSKCASLEKTKQRLQGEVDDLMLDLERTSTARAILDRKQRDLDKVLAEWKQKLDGSQAELEAAQKGSRSLSTEIFKMQNAYEEVVDQLETLRRENKNLQEEISDLTEQIAETGKHLQEVEKSKKQVEQEKSDLQVALEEVEASGSLEHEESKILRVQLELSQVKSELDRRVTEKDEEIEQLKRNSQRAAEAMQSMLDAEIRSRNDALRLKKKMEGDLNELEIQLGHSSRQVAETQKHLRTVQGQLKDSQLHLDDALRSNEDLKEQLAIVERRNGLLLEELEEMKAALEQTERTRRLSEQELLDASDRVQLLHSQNTSLINTKKKLEVDIAQCQAEVENSLQESRNAEEKAKKAITDAAMMAEELKKEQDTSAHLERMKKNLEQTVKDLQHRLDEAEQLALKGGKKQIQKLEARVRELESELDAEQKRGAEALKGAHKYERKVKELTYQAEEDRKNILRLQDLVDKLQAKVKAYKRQAEEAEEQANTQMSKCRRVQHELEEAEERADIAESQVNKLRAKSRDVGAQKMEE.

Residues 33–82 (DSKKACFAMDDKEMYVKGMIQSRENDKVTVKTLDDRTLTLNSDQVFPMNP) form the Myosin N-terminal SH3-like domain. A Myosin motor domain is found at 86–782 (DKIEDMAMMT…LLGLLEEMRD (697 aa)). Lys-130 carries the N6,N6,N6-trimethyllysine modification. Residue 179–186 (GESGAGKT) participates in ATP binding. Actin-binding regions lie at residues 659 to 681 (LNKL…IPNE) and 761 to 775 (RFGH…GLLG). The IQ domain maps to 785 to 814 (LVTLMTRTQAICRGYLMRVEFKKMMERRES). A coiled-coil region spans residues 843–1940 (LLKSAEAERE…RDVGAQKMEE (1098 aa)). The disordered stretch occupies residues 1886 to 1940 (RQAEEAEEQANTQMSKCRRVQHELEEAEERADIAESQVNKLRAKSRDVGAQKMEE). Basic and acidic residues predominate over residues 1929-1940 (KSRDVGAQKMEE).

The protein belongs to the TRAFAC class myosin-kinesin ATPase superfamily. Myosin family. Muscle myosin is a hexameric protein that consists of 2 heavy chain subunits (MHC), 2 alkali light chain subunits (MLC) and 2 regulatory light chain subunits (MLC-2).

The protein resides in the cytoplasm. It is found in the myofibril. Fast twitching myosin mediating the high-velocity and low-tension contractions of specific striated muscles. This is Myosin-13 (MYH13) from Canis lupus familiaris (Dog).